Reading from the N-terminus, the 994-residue chain is MAASFFSDFGLMWYLEELKKEEFRKFKEHLKQMTLQLELKQIPWTEVKKASREELANLLIKHYEEQQAWNITLRIFQKMDRKDLCMKVMRERTGYTKTYQAHAKQKFSRLWSSKSVTEIHLYFEEEVKQEECDHLDRLFAPKEAGKQPRTVIIQGPQGIGKTTLLMKLMMAWSDNKIFRDRFLYTFYFCCRELRELPPTSLADLISREWPDPAAPITEIVSQPERLLFVIDSFEELQGGLNEPDSDLCGDLMEKRPVQVLLSSLLRKKMLPEASLLIAIKPVCPKELRDQVTISEIYQPRGFNESDRLVYFCCFFKDPKRAMEAFNLVRESEQLFSICQIPLLCWILCTSLKQEMQKGKDLALTCQSTTSVYSSFVFNLFTPEGAEGPTPQTQHQLKALCSLAAEGMWTDTFEFCEDDLRRNGVVDADIPALLGTKILLKYGERESSYVFLHVCIQEFCAALFYLLKSHLDHPHPAVRCVQELLVANFEKARRAHWIFLGCFLTGLLNKKEQEKLDAFFGFQLSQEIKQQIHQCLKSLGERGNPQGQVDSLAIFYCLFEMQDPAFVKQAVNLLQEANFHIIDNVDLVVSAYCLKYCSSLRKLCFSVQNVFKKEDEHSSTSDYSLICWHHICSVLTTSGHLRELQVQDSTLSESTFVTWCNQLRHPSCRLQKLGINNVSFSGQSVLLFEVLFYQPDLKYLSFTLTKLSRDDIRSLCDALNYPAGNVKELALVNCHLSPIDCEVLAGLLTNNKKLTYLNVSCNQLDTGVPLLCEALCSPDTVLVYLMLAFCHLSEQCCEYISEMLLRNKSVRYLDLSANVLKDEGLKTLCEALKHPDCCLDSLCLVKCFITAAGCEDLASALISNQNLKILQIGCNEIGDVGVQLLCRALTHTDCRLEILGLEECGLTSTCCKDLASVLTCSKTLQQLNLTLNTLDHTGVVVLCEALRHPECALQVLGLRKTDFDEETQALLTAEEERNPNLTITDDCDTITRVEI.

Positions 1 to 94 (MAASFFSDFG…CMKVMRERTG (94 aa)) constitute a Pyrin domain. One can recognise an NACHT domain in the interval 149–472 (RTVIIQGPQG…FYLLKSHLDH (324 aa)). 155 to 162 (GPQGIGKT) contacts ATP. LRR repeat units follow at residues 637 to 660 (SGHL…TWCN), 698 to 721 (YLSF…LNYP), 722 to 745 (AGNV…VLAG), 750 to 777 (NKKL…LCSP), 806 to 833 (NKSV…ALKH), 863 to 886 (NQNL…LLCR), 920 to 943 (SKTL…VLCE), and 949 to 972 (ECAL…LLTA).

This sequence belongs to the NLRP family. Interacts with CHUK/IKKA, inhibiting its kinase activity.

Its function is as follows. May be involved in inflammation and recognition of cytosolic pathogen-associated molecular patterns (PAMPs) not intercepted by membrane-bound receptors. Acts as a negative regulator of the type I interferon signaling pathway by serving as an adapter to promote DTX4-mediated ubiquitination of activated TBK1, and its subsequent degradation. Suppresses NF-kappaB induction by the cytokines TNFA and IL1B, suggesting that it operates at a point of convergence in these two cytokine signaling pathways. The protein is NACHT, LRR and PYD domains-containing protein 4 of Homo sapiens (Human).